The sequence spans 165 residues: Protein SprT (165 aa).

Residues 22–163 form the SprT-like domain; it reads LAQANLKLDR…RCVHCGEPLV (142 aa). Residue histidine 78 participates in Zn(2+) binding. Glutamate 79 is an active-site residue. Histidine 82 is a binding site for Zn(2+).

Belongs to the SprT family. Requires Zn(2+) as cofactor.

The protein resides in the cytoplasm. The polypeptide is Protein SprT (Salmonella paratyphi A (strain ATCC 9150 / SARB42)).